The primary structure comprises 286 residues: Meteorin-like protein (286 aa).

An N-terminal signal peptide occupies residues 1 to 21; that stretch reads MLSPFLAYLLSVVLLCRIARS. Disulfide bonds link Cys28–Cys51, Cys84–Cys120, Cys165–Cys235, Cys168–Cys259, and Cys178–Cys281.

This sequence belongs to the meteorin family.

The protein resides in the secreted. Hormone induced following exercise or cold exposure that promotes energy expenditure. Induced either in the skeletal muscle after exercise or in adipose tissue following cold exposure and is present in the circulation. Able to stimulate energy expenditure associated with the browning of the white fat depots and improves glucose tolerance. The chain is Meteorin-like protein (metrnl) from Danio rerio (Zebrafish).